Consider the following 37-residue polypeptide: Mu-cyrtautoxin-As1a (37 aa).

4 disulfide bridges follow: C1–C15, C8–C19, C14–C35, and C26–C31.

It belongs to the neurotoxin 13 (insecticidal toxin ABC) family. 01 (Aps III) subfamily. In terms of tissue distribution, expressed by the venom gland.

It localises to the secreted. In terms of biological role, the recombinant mu-cyrtautoxin-As1a potently and voltage-independently blocks voltage-gated sodium channels (Nav) of insects. It acts by pluging the outer vestibule of the channel. It acts in combination with a weak (30%) voltage-independent block of insect voltage-gated calcium (Cav) channels (low-voltage and high-voltage channels). Tested on DUM neurons, it inhibits sodium currents with an IC(50) of 540 nM (and a Hill coefficient &gt;1, reflecting an incomplete block at higher concentrations). In vivo, it induces flaccid paralysis in adult Australian sheep blowfly Lucilia cuprina. It is both paralytic and lethal, when injected into lepidopteran larvae. It is a slower acting toxin, being lethal at 24 hours, but not paralytic at 1 hour post-injection. The chain is Mu-cyrtautoxin-As1a from Apomastus schlingeri (Trap-door spider).